The sequence spans 453 residues: Verruculogen prenyltransferase (453 aa).

Position 89 (E89) interacts with substrate. The dimethylallyl diphosphate site is built by R102, K194, Y196, K273, Y275, Y378, Y443, and Y447.

Belongs to the tryptophan dimethylallyltransferase family.

It catalyses the reaction verruculogen + dimethylallyl diphosphate = fumitremorgin A + diphosphate. The protein operates within mycotoxin biosynthesis. Verruculogen prenyltransferase; part of the gene cluster that mediates the biosynthesis of fumitremorgins, indole alkaloids that carry not only intriguing chemical structures, but also interesting biological and pharmacological activities. The biosynthesis of fumitremorgin-type alkaloids begins by condensation of the two amino acids L-tryptophan and L-proline to brevianamide F, catalyzed by the non-ribosomal peptide synthetase ftmPS/ftmA. Brevianamide F is then prenylated by the prenyltransferase ftmPT1/ftmB in the presence of dimethylallyl diphosphate, resulting in the formation of tryprostatin B. The three cytochrome P450 monooxygenases, ftmP450-1/ftmC, ftmP450-2/ftmE and ftmP450-3/FtmG, are responsible for the conversion of tryprostatin B to 6-hydroxytryprostatin B, tryprostatin A to fumitremorgin C and fumitremorgin C to 12,13-dihydroxyfumitremorgin C, respectively. The putative methyltransferase ftmMT/ftmD is expected for the conversion of 6-hydroxytryprostatin B to tryprostatin A. FtmPT2/FtmH catalyzes the prenylation of 12,13-dihydroxyfumitre-morgin C in the presence of dimethylallyl diphosphate, resulting in the formation of fumitremorgin B. Fumitremorgin B is further converted to verruculogen by ftmOx1/ftmF via the insertion of an endoperoxide bond between the two prenyl moieties. Finally, verruculogen is further converted to fumitremorgin A by the verruculogen prenyltransferase ftmPT3. The chain is Verruculogen prenyltransferase from Neosartorya fischeri (strain ATCC 1020 / DSM 3700 / CBS 544.65 / FGSC A1164 / JCM 1740 / NRRL 181 / WB 181) (Aspergillus fischerianus).